We begin with the raw amino-acid sequence, 667 residues long: Polypeptide N-acetylgalactosaminyltransferase 3 (667 aa).

Residues 1–12 (MGLRFQQLKKLW) lie on the Cytoplasmic side of the membrane. A helical; Signal-anchor for type II membrane protein membrane pass occupies residues 13–35 (LLYLFLLFFAFFMFAISINLYVA). The Lumenal portion of the chain corresponds to 36 to 667 (SIQGGDAEMR…WGFIPLPWRM (632 aa)). Residues asparagine 75 and asparagine 129 are each glycosylated (N-linked (GlcNAc...) asparagine). 5 disulfide bridges follow: cysteine 140–cysteine 375, cysteine 366–cysteine 446, cysteine 526–cysteine 547, cysteine 572–cysteine 601, and cysteine 626–cysteine 649. The catalytic subdomain A stretch occupies residues 149 to 259 (LPSTSVIIVF…RGWLEPLLSR (111 aa)). Residues aspartate 190 and arginine 220 each contribute to the substrate site. Mn(2+) contacts are provided by aspartate 243 and histidine 245. N-linked (GlcNAc...) asparagine glycosylation is found at asparagine 279 and asparagine 313. The catalytic subdomain B stretch occupies residues 321 to 383 (PIATPGMAGG…PCSHVGHVFR (63 aa)). A substrate-binding site is contributed by tryptophan 352. Position 380 (histidine 380) interacts with Mn(2+). Residues arginine 383 and tyrosine 388 each coordinate substrate. Residue asparagine 433 is glycosylated (N-linked (GlcNAc...) asparagine). Residues 513 to 661 (EELMALIDLE…KDITQKWGFI (149 aa)) form the Ricin B-type lectin domain. Asparagine 590 carries an N-linked (GlcNAc...) asparagine glycan.

It belongs to the glycosyltransferase 2 family. GalNAc-T subfamily. Mn(2+) is required as a cofactor. In terms of tissue distribution, expressed in developing oocytes and egg chambers. During embryonic stages 9-11, expressed in the primordiums of the foregut, midgut and hindgut. During embryonic stages 12-13, expression is found uniquely in the posterior spiracle. During embryonic stages 14-17, expressed in the pharynx, esophagus and posterior spiracles. Expression observed in the epidermis during embryonic stages 16-17. In third instar larvae, expressed ubiquitously in wing, with increased expression in pleura and notum, eye-antennal, leg and haltere imaginal disks.

The protein localises to the golgi apparatus membrane. It carries out the reaction L-seryl-[protein] + UDP-N-acetyl-alpha-D-galactosamine = a 3-O-[N-acetyl-alpha-D-galactosaminyl]-L-seryl-[protein] + UDP + H(+). The catalysed reaction is L-threonyl-[protein] + UDP-N-acetyl-alpha-D-galactosamine = a 3-O-[N-acetyl-alpha-D-galactosaminyl]-L-threonyl-[protein] + UDP + H(+). The protein operates within protein modification; protein glycosylation. In terms of biological role, catalyzes the initial reaction in O-linked oligosaccharide biosynthesis, the transfer of an N-acetyl-D-galactosamine residue to a serine or threonine residue on the protein receptor. It can both act as a peptide transferase that transfers GalNAc onto unmodified peptide substrates, and as a glycopeptide transferase that requires the prior addition of a GalNAc on a peptide before adding additional GalNAc moieties. Prefers EA2 as substrate. Has weak activity toward Muc5AC-3, -13 and -3/13 substrates. Plays a critical role in the regulation of integrin-mediated cell adhesion during wing development by influencing, via glycosylation, the secretion and localization of the integrin ligand Tig to the basal cell layer interface. Might have a role in protein O-glycosylation in the Golgi and thereby in establishing and/or maintaining a proper secretory apparatus structure. Together with Pgant35A, regulates integrin levels and activity-dependent integrin signaling at the synapse in neurons and muscles. This Drosophila melanogaster (Fruit fly) protein is Polypeptide N-acetylgalactosaminyltransferase 3.